Reading from the N-terminus, the 112-residue chain is cAMP-regulated phosphoprotein 19 (112 aa).

Residues 1–11 are compositionally biased toward low complexity; it reads MSAESPEPASA. A disordered region spans residues 1-49; the sequence is MSAESPEPASAEEQKEMEDKVLSPEKAEEAKLKARYPHLGQKPGGSDFL. The span at 12 to 32 shows a compositional bias: basic and acidic residues; it reads EEQKEMEDKVLSPEKAEEAKL. 2 positions are modified to phosphoserine; by GWL: Ser62 and Ser104. The segment at 72-112 is disordered; sequence MKNKQLPTAAPDKTEVTGDHIPTPQDLPQRKPSLVASKLAG. Ser104 carries the post-translational modification Phosphoserine; by PKA.

Belongs to the endosulfine family. As to quaternary structure, interacts (when phosphorylated at Ser-62) with PPP2R2D. Phosphorylation at Ser-62 by MASTL/GWL during mitosis is essential for interaction with PPP2R2D (PR55-delta) and subsequent inactivation of PP2A.

Its subcellular location is the cytoplasm. Protein phosphatase inhibitor that specifically inhibits protein phosphatase 2A (PP2A) during mitosis. Inhibition of PP2A is enhanced when ARPP19 is phosphorylated. When phosphorylated at Ser-62 during mitosis, specifically interacts with PPP2R2D (PR55-delta) and inhibits its activity, leading to inactivation of PP2A, an essential condition to keep cyclin-B1-CDK1 activity high during M phase. In Taeniopygia guttata (Zebra finch), this protein is cAMP-regulated phosphoprotein 19 (ARPP19).